A 474-amino-acid chain; its full sequence is 2-succinylbenzoate--CoA ligase (474 aa).

The protein belongs to the ATP-dependent AMP-binding enzyme family. MenE subfamily.

The catalysed reaction is 2-succinylbenzoate + ATP + CoA = 2-succinylbenzoyl-CoA + AMP + diphosphate. The protein operates within quinol/quinone metabolism; 1,4-dihydroxy-2-naphthoate biosynthesis; 1,4-dihydroxy-2-naphthoate from chorismate: step 5/7. It participates in quinol/quinone metabolism; menaquinone biosynthesis. In terms of biological role, converts 2-succinylbenzoate (OSB) to 2-succinylbenzoyl-CoA (OSB-CoA). The chain is 2-succinylbenzoate--CoA ligase from Staphylococcus epidermidis (strain ATCC 12228 / FDA PCI 1200).